Consider the following 240-residue polypeptide: MLPFLIALQFLSSLPVSLPGMPAAREVGRSLLYYPLVGLLFGLLLWLASHLLQGTPAPLHAALLLTAWVLLSGALHLDGLADSADAWLGGFGDRERTLQIMKDPRSGPIAVVTLVLVLLLKFCALWVLVEQGVGAQLLLAPLIGRTAMLGLFLCTPYVRPGGLGQALAEHLPRRAAGWVLLCCALFCLLLGGWVVLLAVAVFAWLRHLMYRRLGGATGDTAGALLELLELAVVLGLALGL.

Transmembrane regions (helical) follow at residues 31–51 (LLYYPLVGLLFGLLLWLASHL), 57–77 (APLHAALLLTAWVLLSGALHL), 109–129 (IAVVTLVLVLLLKFCALWVLV), 133–153 (VGAQLLLAPLIGRTAMLGLFL), and 185–205 (LFCLLLGGWVVLLAVAVFAWL).

Belongs to the CobS family. Requires Mg(2+) as cofactor.

It is found in the cell inner membrane. The catalysed reaction is alpha-ribazole + adenosylcob(III)inamide-GDP = adenosylcob(III)alamin + GMP + H(+). The enzyme catalyses alpha-ribazole 5'-phosphate + adenosylcob(III)inamide-GDP = adenosylcob(III)alamin 5'-phosphate + GMP + H(+). It functions in the pathway cofactor biosynthesis; adenosylcobalamin biosynthesis; adenosylcobalamin from cob(II)yrinate a,c-diamide: step 7/7. Functionally, joins adenosylcobinamide-GDP and alpha-ribazole to generate adenosylcobalamin (Ado-cobalamin). Also synthesizes adenosylcobalamin 5'-phosphate from adenosylcobinamide-GDP and alpha-ribazole 5'-phosphate. The sequence is that of Adenosylcobinamide-GDP ribazoletransferase from Pseudomonas putida (strain GB-1).